The primary structure comprises 205 residues: Transcriptional regulatory protein PdtaR (205 aa).

Residues 15-129 (RVLIAEDEAL…DLIPAIELAV (115 aa)) form the Response regulatory domain. Aspartate 65 carries the 4-aspartylphosphate modification. Residues 135 to 196 (ITALEGEVAT…TMKRVAEVVL (62 aa)) enclose the ANTAR domain.

Post-translationally, phosphorylated and activated by PdtaS.

The protein resides in the cytoplasm. Member of the two-component regulatory system PdtaR/PdtaS. This two-component system plays an essential role in mycobacterial adaptation to poor nutrient conditions. PdtaR probably acts at the level of transcriptional antitermination rather than transcriptional initiation. Functionally, in addition, the PdtaR/PdtaS two-component system controls copper and nitric oxide (NO) resistance downstream of the intramembrane protease Rip1. This coupled Rip1/PdtaS/PdtaR circuit controls NO resistance and acute lung infection in mice by relieving PdtaR/PdtaS-mediated repression of isonitrile chalkophore biosynthesis. Two signals are required to fully inactivate the PdtaR/PdtaS system and mediate NO resistance: a cytoplasmic inhibitory signal through the PdtaS kinase mediated by direct sensing of NO and the production of PPE1-5', an NO-induced small RNA, to sequester PdtaR. The sequence is that of Transcriptional regulatory protein PdtaR (pdtaR) from Mycobacterium tuberculosis (strain CDC 1551 / Oshkosh).